We begin with the raw amino-acid sequence, 308 residues long: tRNA dimethylallyltransferase 1 (308 aa).

9-16 contributes to the ATP binding site; that stretch reads GPTGVGKT. Residue 11–16 participates in substrate binding; the sequence is TGVGKT. Residues 34–37 form an interaction with substrate tRNA region; it reads DSRQ.

It belongs to the IPP transferase family. In terms of assembly, monomer. Mg(2+) is required as a cofactor.

The catalysed reaction is adenosine(37) in tRNA + dimethylallyl diphosphate = N(6)-dimethylallyladenosine(37) in tRNA + diphosphate. Catalyzes the transfer of a dimethylallyl group onto the adenine at position 37 in tRNAs that read codons beginning with uridine, leading to the formation of N6-(dimethylallyl)adenosine (i(6)A). In Bacteroides thetaiotaomicron (strain ATCC 29148 / DSM 2079 / JCM 5827 / CCUG 10774 / NCTC 10582 / VPI-5482 / E50), this protein is tRNA dimethylallyltransferase 1.